The following is a 599-amino-acid chain: Elongation factor 4 (599 aa).

Residues 5 to 187 (STIRNFAIIA…AIVHRLPAPV (183 aa)) enclose the tr-type G domain. GTP is bound by residues 17-22 (DHGKST) and 134-137 (NKAD).

The protein belongs to the TRAFAC class translation factor GTPase superfamily. Classic translation factor GTPase family. LepA subfamily.

Its subcellular location is the cell inner membrane. The enzyme catalyses GTP + H2O = GDP + phosphate + H(+). Functionally, required for accurate and efficient protein synthesis under certain stress conditions. May act as a fidelity factor of the translation reaction, by catalyzing a one-codon backward translocation of tRNAs on improperly translocated ribosomes. Back-translocation proceeds from a post-translocation (POST) complex to a pre-translocation (PRE) complex, thus giving elongation factor G a second chance to translocate the tRNAs correctly. Binds to ribosomes in a GTP-dependent manner. The chain is Elongation factor 4 from Anaplasma marginale (strain Florida).